The chain runs to 624 residues: Bifunctional 3'-phosphoadenosine 5'-phosphosulfate synthase 1 (624 aa).

An N-acetylmethionine modification is found at methionine 1. The interval 1 to 225 (MELPGSLCKK…VVELLQERDI (225 aa)) is adenylyl-sulfate kinase. The residue at position 12 (lysine 12) is an N6-acetyllysine. Residue 62-67 (GAGKTT) coordinates ATP. Adenosine 5'-phosphosulfate contacts are provided by residues 89 to 92 (DNIR), phenylalanine 101, 106 to 109 (REEN), 132 to 133 (IS), lysine 171, and 184 to 185 (GF). ATP-binding positions include cysteine 207, cysteine 212, 419–422 (QLRN), 521–525 (GRDPA), and alanine 563. The sulfate adenylyltransferase stretch occupies residues 234–624 (VKELYVPENK…AEYYKALEKA (391 aa)).

In the N-terminal section; belongs to the APS kinase family. This sequence in the C-terminal section; belongs to the sulfate adenylyltransferase family. As to quaternary structure, homodimer.

The enzyme catalyses sulfate + ATP + H(+) = adenosine 5'-phosphosulfate + diphosphate. It catalyses the reaction adenosine 5'-phosphosulfate + ATP = 3'-phosphoadenylyl sulfate + ADP + H(+). It functions in the pathway sulfur metabolism; sulfate assimilation. Functionally, bifunctional enzyme with both ATP sulfurylase and APS kinase activity, which mediates two steps in the sulfate activation pathway. The first step is the transfer of a sulfate group to ATP to yield adenosine 5'-phosphosulfate (APS), and the second step is the transfer of a phosphate group from ATP to APS yielding 3'-phosphoadenylylsulfate (PAPS: activated sulfate donor used by sulfotransferase). In mammals, PAPS is the sole source of sulfate; APS appears to be only an intermediate in the sulfate-activation pathway. Required for normal biosynthesis of sulfated L-selectin ligands in endothelial cells. The chain is Bifunctional 3'-phosphoadenosine 5'-phosphosulfate synthase 1 (PAPSS1) from Cavia porcellus (Guinea pig).